Here is a 211-residue protein sequence, read N- to C-terminus: RNA chaperone ProQ (211 aa).

The segment at glutamate 112–serine 148 is disordered. Over residues alanine 124–glycine 134 the composition is skewed to basic residues.

The protein belongs to the ProQ family.

The protein localises to the cytoplasm. Its function is as follows. RNA chaperone with significant RNA binding, RNA strand exchange and RNA duplexing activities. The sequence is that of RNA chaperone ProQ from Histophilus somni (strain 2336) (Haemophilus somnus).